The sequence spans 186 residues: Putative manganese efflux pump MntP (186 aa).

The next 6 membrane-spanning stretches (helical) occupy residues 1–21, 39–59, 61–81, 102–122, 134–156, and 165–185; these read MSFLTNFLLGLGLAMDAFAVS, LAVFFGSFQAMMPVLGWIGGS, VSSFVSDYAPWIAFLLLAFIG, YSVLFLLAVATSIDALAVGMS, VIIIGCVTFVMSFCGAILGYRLG, and ILGGLILIGLGGKILAEHMLW.

This sequence belongs to the MntP (TC 9.B.29) family.

The protein localises to the cell membrane. In terms of biological role, probably functions as a manganese efflux pump. The chain is Putative manganese efflux pump MntP from Methanosarcina acetivorans (strain ATCC 35395 / DSM 2834 / JCM 12185 / C2A).